An 806-amino-acid polypeptide reads, in one-letter code: G-type lectin S-receptor-like serine/threonine-protein kinase At1g61430 (806 aa).

Residues methionine 1–alanine 24 form the signal peptide. A Bulb-type lectin domain is found at glycine 25–phenylalanine 144. Topologically, residues glycine 25–threonine 425 are extracellular. Residues asparagine 53, asparagine 94, asparagine 117, and asparagine 236 are each glycosylated (N-linked (GlcNAc...) asparagine). Residues proline 277 to lysine 313 form the EGF-like domain. 2 cysteine pairs are disulfide-bonded: cysteine 281–cysteine 293 and cysteine 287–cysteine 301. 3 N-linked (GlcNAc...) asparagine glycosylation sites follow: asparagine 319, asparagine 335, and asparagine 374. Residues cysteine 332 to arginine 414 enclose the PAN domain. Intrachain disulfides connect cysteine 367/cysteine 388 and cysteine 371/cysteine 377. The chain crosses the membrane as a helical span at residues isoleucine 426–phenylalanine 446. The Cytoplasmic segment spans residues tryptophan 447–arginine 806. A Protein kinase domain is found at phenylalanine 489–phenylalanine 777. ATP contacts are provided by residues leucine 495–valine 503 and lysine 520. 2 positions are modified to phosphoserine: serine 526 and serine 541. Residues arginine 581–isoleucine 598 form a caM-binding region. Catalysis depends on aspartate 617, which acts as the Proton acceptor. Serine 621 and serine 634 each carry phosphoserine. Phosphothreonine is present on threonine 651. A phosphoserine mark is found at serine 694, serine 695, and serine 788.

The protein belongs to the protein kinase superfamily. Ser/Thr protein kinase family.

Its subcellular location is the cell membrane. It catalyses the reaction L-seryl-[protein] + ATP = O-phospho-L-seryl-[protein] + ADP + H(+). The catalysed reaction is L-threonyl-[protein] + ATP = O-phospho-L-threonyl-[protein] + ADP + H(+). The protein is G-type lectin S-receptor-like serine/threonine-protein kinase At1g61430 of Arabidopsis thaliana (Mouse-ear cress).